The following is a 314-amino-acid chain: Acetyl-coenzyme A carboxylase carboxyl transferase subunit beta (314 aa).

A CoA carboxyltransferase N-terminal domain is found at 37–307 (LWQKCPACDA…MSLPALEPTY (271 aa)). 4 residues coordinate Zn(2+): Cys41, Cys44, Cys60, and Cys63. A C4-type zinc finger spans residues 41 to 63 (CPACDALTYTKDLQQNWQVCPSC).

It belongs to the AccD/PCCB family. Acetyl-CoA carboxylase is a heterohexamer composed of biotin carboxyl carrier protein (AccB), biotin carboxylase (AccC) and two subunits each of ACCase subunit alpha (AccA) and ACCase subunit beta (AccD). It depends on Zn(2+) as a cofactor.

It localises to the cytoplasm. It catalyses the reaction N(6)-carboxybiotinyl-L-lysyl-[protein] + acetyl-CoA = N(6)-biotinyl-L-lysyl-[protein] + malonyl-CoA. It participates in lipid metabolism; malonyl-CoA biosynthesis; malonyl-CoA from acetyl-CoA: step 1/1. Component of the acetyl coenzyme A carboxylase (ACC) complex. Biotin carboxylase (BC) catalyzes the carboxylation of biotin on its carrier protein (BCCP) and then the CO(2) group is transferred by the transcarboxylase to acetyl-CoA to form malonyl-CoA. The sequence is that of Acetyl-coenzyme A carboxylase carboxyl transferase subunit beta from Synechococcus sp. (strain JA-3-3Ab) (Cyanobacteria bacterium Yellowstone A-Prime).